Consider the following 147-residue polypeptide: Deoxyuridine 5'-triphosphate nucleotidohydrolase (147 aa).

R24 serves as a coordination point for Mg(2+). DUTP is bound by residues 68–70, 82–85, Y88, G93, I95, and R111; these read PRS and GVID.

The protein belongs to the dUTPase family. The cofactor is Mg(2+).

It catalyses the reaction dUTP + H2O = dUMP + diphosphate + H(+). In terms of biological role, this enzyme is involved in nucleotide metabolism: it produces dUMP, the immediate precursor of thymidine nucleotides and it decreases the intracellular concentration of dUTP so that uracil cannot be incorporated into DNA. This Oryctolagus cuniculus (Rabbit) protein is Deoxyuridine 5'-triphosphate nucleotidohydrolase (OPG046).